We begin with the raw amino-acid sequence, 598 residues long: EF-hand and coiled-coil domain-containing protein 1 (598 aa).

Residues 1–22 are disordered; sequence MEPVSTGAEAGMEGAGGDPYRR. The EF-hand domain maps to 54–89; the sequence is GLDQYLQEVFHHLDCRGAGRLPRADFRALCAVLGLR. 3 disordered regions span residues 96–127, 175–198, and 326–411; these read AGQA…DTDE, RLRR…PDCE, and YRSE…KKTP. The span at 175–185 shows a compositional bias: basic residues; that stretch reads RLRRPRRRRRP. Residues 196 to 303 are a coiled coil; it reads DCERVARLEE…RSLHRVRELE (108 aa). Residues 343–359 are compositionally biased toward basic and acidic residues; it reads PGDKSNEPEDAGTRDPD. The segment covering 394-404 has biased composition (acidic residues); sequence SDEEEVEEERW. Positions 479 to 533 form a coiled coil; the sequence is TSEEEAELQQKVEENEHLRLELQMVETERVRLSLLEEKLVDVLQLLQRLRDLNIS.

This Homo sapiens (Human) protein is EF-hand and coiled-coil domain-containing protein 1 (EFCC1).